A 506-amino-acid chain; its full sequence is Galactose/methyl galactoside import ATP-binding protein MglA (506 aa).

2 ABC transporter domains span residues 14–249 (LEMS…VGRS) and 264–506 (VILE…SLHL). Residue 46–53 (GENGAGKS) participates in ATP binding.

This sequence belongs to the ABC transporter superfamily. Galactose/methyl galactoside importer (TC 3.A.1.2.3) family. In terms of assembly, the complex is composed of one ATP-binding protein (MglA), two transmembrane proteins (MglC) and a solute-binding protein (MglB).

It is found in the cell inner membrane. It catalyses the reaction D-galactose(out) + ATP + H2O = D-galactose(in) + ADP + phosphate + H(+). The enzyme catalyses methyl beta-D-galactoside(out) + ATP + H2O = methyl beta-D-galactoside(in) + ADP + phosphate + H(+). Its function is as follows. Part of the ABC transporter complex MglABC involved in galactose/methyl galactoside import. Responsible for energy coupling to the transport system. This Shigella flexneri serotype 5b (strain 8401) protein is Galactose/methyl galactoside import ATP-binding protein MglA.